The primary structure comprises 365 residues: Putative DNA-directed RNA polymerase subunit alpha-like 3 (365 aa).

Belongs to the RNA polymerase alpha chain family. As to quaternary structure, in plastids the minimal PEP RNA polymerase catalytic core is composed of four subunits: alpha, beta, beta', and beta''. When a (nuclear-encoded) sigma factor is associated with the core the holoenzyme is formed, which can initiate transcription.

It localises to the plastid. The protein localises to the chloroplast. It carries out the reaction RNA(n) + a ribonucleoside 5'-triphosphate = RNA(n+1) + diphosphate. DNA-dependent RNA polymerase catalyzes the transcription of DNA into RNA using the four ribonucleoside triphosphates as substrates. In Pelargonium hortorum (Common geranium), this protein is Putative DNA-directed RNA polymerase subunit alpha-like 3 (rpoAL3-A).